The sequence spans 570 residues: Proline--tRNA ligase (570 aa).

It belongs to the class-II aminoacyl-tRNA synthetase family. ProS type 1 subfamily. As to quaternary structure, homodimer.

It is found in the cytoplasm. The enzyme catalyses tRNA(Pro) + L-proline + ATP = L-prolyl-tRNA(Pro) + AMP + diphosphate. Functionally, catalyzes the attachment of proline to tRNA(Pro) in a two-step reaction: proline is first activated by ATP to form Pro-AMP and then transferred to the acceptor end of tRNA(Pro). As ProRS can inadvertently accommodate and process non-cognate amino acids such as alanine and cysteine, to avoid such errors it has two additional distinct editing activities against alanine. One activity is designated as 'pretransfer' editing and involves the tRNA(Pro)-independent hydrolysis of activated Ala-AMP. The other activity is designated 'posttransfer' editing and involves deacylation of mischarged Ala-tRNA(Pro). The misacylated Cys-tRNA(Pro) is not edited by ProRS. The chain is Proline--tRNA ligase from Clostridium perfringens (strain ATCC 13124 / DSM 756 / JCM 1290 / NCIMB 6125 / NCTC 8237 / Type A).